A 753-amino-acid chain; its full sequence is Catalase-peroxidase (753 aa).

A signal peptide spans 1-39 (MLPRVNKRSNCIAKKTSNRLISAVSLAIASLCISQSALA). Residues 118–241 (WHSTGTYRMS…LAAVQMGLIY (124 aa)) constitute a cross-link (tryptophyl-tyrosyl-methioninium (Trp-Tyr) (with M-267)). Residue His119 is the Proton acceptor of the active site. The segment at residues 241 to 267 (YVNPEGPNGNHDPISAAADIRDVFARM) is a cross-link (tryptophyl-tyrosyl-methioninium (Tyr-Met) (with W-118)). His282 serves as a coordination point for heme b.

Belongs to the peroxidase family. Peroxidase/catalase subfamily. As to quaternary structure, homodimer or homotetramer. Heme b is required as a cofactor. Formation of the three residue Trp-Tyr-Met cross-link is important for the catalase, but not the peroxidase activity of the enzyme.

It carries out the reaction H2O2 + AH2 = A + 2 H2O. The enzyme catalyses 2 H2O2 = O2 + 2 H2O. In terms of biological role, bifunctional enzyme with both catalase and broad-spectrum peroxidase activity. This is Catalase-peroxidase from Pseudoalteromonas atlantica (strain T6c / ATCC BAA-1087).